The following is a 362-amino-acid chain: GDSL esterase/lipase At5g45670 (362 aa).

A signal peptide spans 1–23 (MARMSLMIMMIMVAVTMINIAKS). Serine 36 serves as the catalytic Nucleophile. Active-site residues include aspartate 326 and histidine 329.

Belongs to the 'GDSL' lipolytic enzyme family.

It localises to the secreted. The sequence is that of GDSL esterase/lipase At5g45670 from Arabidopsis thaliana (Mouse-ear cress).